Consider the following 260-residue polypeptide: FAS1 domain-containing protein SELMODRAFT_448915 (260 aa).

Over 1-35 the chain is Cytoplasmic; it reads MRRTGRSYKPLLSQLKDHHIPVHPSSRAERAMESR. Residues 36–58 traverse the membrane as a helical segment; that stretch reads TLLVLLFVGVVTIVSSGLERAAA. The FAS1 domain occupies 59–198; it reads QDDTDDGILP…IACHGIDRVL (140 aa). At 59 to 260 the chain is on the extracellular side; sequence QDDTDDGILP…SSASRYPVSE (202 aa). 6 N-linked (GlcNAc...) asparagine glycosylation sites follow: Asn-118, Asn-169, Asn-176, Asn-201, Asn-236, and Asn-247. The segment at 210–260 is disordered; sequence PEASPPFGAEQASPAPEALPPGTRSPNNTANPSNRKSNSTRSSASRYPVSE. Residues 233–254 show a composition bias toward polar residues; sequence RSPNNTANPSNRKSNSTRSSAS.

It is found in the membrane. The protein is FAS1 domain-containing protein SELMODRAFT_448915 of Selaginella moellendorffii (Spikemoss).